The primary structure comprises 204 residues: Tumor protein D53 (204 aa).

Positions Met1–Asp20 are disordered. A coiled-coil region spans residues Val22–Met73. 4 positions are modified to phosphoserine: Ser29, Ser86, Ser122, and Ser131. Arg133 carries the omega-N-methylarginine modification. Thr146 bears the Phosphothreonine mark. Ser149 and Ser174 each carry phosphoserine.

This sequence belongs to the TPD52 family. As to quaternary structure, forms a homodimer or heterodimer with other members of the family.

The protein is Tumor protein D53 (TPD52L1) of Homo sapiens (Human).